A 213-amino-acid chain; its full sequence is Adenylate kinase (213 aa).

ATP is bound at residue 10 to 15 (GAGKGT). The segment at 30-59 (STGDMLRAAVAAGSEVGLRAKAAMESGSLV) is NMP. Residues T31, R36, 57–59 (SLV), 85–88 (GFPR), and Q92 each bind AMP. The segment at 126–163 (GRSSCEKCGEGYHDSFKPSAQPNVCDKCSGTLKRRADD) is LID. An ATP-binding site is contributed by R127. Residues C130, C133, C150, and C153 each coordinate Zn(2+). Positions 160 and 171 each coordinate AMP. Q199 provides a ligand contact to ATP.

The protein belongs to the adenylate kinase family. As to quaternary structure, monomer.

The protein localises to the cytoplasm. It catalyses the reaction AMP + ATP = 2 ADP. It functions in the pathway purine metabolism; AMP biosynthesis via salvage pathway; AMP from ADP: step 1/1. Functionally, catalyzes the reversible transfer of the terminal phosphate group between ATP and AMP. Plays an important role in cellular energy homeostasis and in adenine nucleotide metabolism. This is Adenylate kinase from Magnetococcus marinus (strain ATCC BAA-1437 / JCM 17883 / MC-1).